The chain runs to 794 residues: EVI5-like protein (794 aa).

The segment covering 1–30 (MASPTLSPDSSSQEALSAPTCSPTSDSENL) has biased composition (polar residues). Disordered stretches follow at residues 1 to 36 (MASP…DELE) and 49 to 75 (EADS…SSSA). The segment covering 55 to 75 (MRSMNGSRRNSGSSLVSSSSA) has biased composition (low complexity). In terms of domain architecture, Rab-GAP TBC spans 115–300 (GIPHHFRAIV…RVFDIFMYEG (186 aa)). Coiled-coil stretches lie at residues 358-449 (KKMK…QQEN) and 569-709 (EAQA…LKGP). Ser-685 bears the Phosphoserine mark. Positions 766-794 (LERPAKDSEGSSDSDADELAAPYSQGLDN) are disordered.

In terms of assembly, may interact with RAB10.

Functionally, functions as a GTPase-activating protein (GAP) with a broad specificity. This is EVI5-like protein (EVI5L) from Homo sapiens (Human).